The sequence spans 329 residues: MKITIIGSGAWGSTLAQVLTDNNNQVLLYDINLSYVEKINQGKHPIFNAPLVNVKAVSCLKQALDYSDLIVLSVPMKFMRHLLKQIALMLTTPKSFVNVSKGIEPLTFLRVSEIVKQVIPAPLLANFASLMGPSHAEEVILRKLTLLTAASSNPAFALEIQKLFSCPNYLKVYTSSDLVGNEICSAFKNVLAFINGILVAKNFGINSQAALMSRGILEMSVLVTFYQGNPQTVLGLPGLGDLIVTAFSKYSRNFNAGAKIAAGITYQQIIDSSLQTIEGFQTLNAFYQLQLKHNLDLPIIQASYQLIFESKPFETVFATLMQRPFKSEF.

NADPH is bound by residues tryptophan 11 and lysine 101. Residues lysine 101, glycine 132, and serine 134 each contribute to the sn-glycerol 3-phosphate site. Alanine 136 is an NADPH binding site. 5 residues coordinate sn-glycerol 3-phosphate: lysine 188, aspartate 241, serine 251, arginine 252, and asparagine 253. Lysine 188 functions as the Proton acceptor in the catalytic mechanism. Residue arginine 252 coordinates NADPH. Glutamate 278 contributes to the NADPH binding site.

It belongs to the NAD-dependent glycerol-3-phosphate dehydrogenase family.

Its subcellular location is the cytoplasm. It carries out the reaction sn-glycerol 3-phosphate + NAD(+) = dihydroxyacetone phosphate + NADH + H(+). It catalyses the reaction sn-glycerol 3-phosphate + NADP(+) = dihydroxyacetone phosphate + NADPH + H(+). It functions in the pathway membrane lipid metabolism; glycerophospholipid metabolism. Catalyzes the reduction of the glycolytic intermediate dihydroxyacetone phosphate (DHAP) to sn-glycerol 3-phosphate (G3P), the key precursor for phospholipid synthesis. The protein is Glycerol-3-phosphate dehydrogenase [NAD(P)+] of Onion yellows phytoplasma (strain OY-M).